A 156-amino-acid polypeptide reads, in one-letter code: Small ribosomal subunit protein uS7 (156 aa).

It belongs to the universal ribosomal protein uS7 family. As to quaternary structure, part of the 30S ribosomal subunit. Contacts proteins S9 and S11.

Its function is as follows. One of the primary rRNA binding proteins, it binds directly to 16S rRNA where it nucleates assembly of the head domain of the 30S subunit. Is located at the subunit interface close to the decoding center, probably blocks exit of the E-site tRNA. The sequence is that of Small ribosomal subunit protein uS7 from Syntrophobacter fumaroxidans (strain DSM 10017 / MPOB).